Reading from the N-terminus, the 734-residue chain is MALRFPRFSQGLAQDPTTRRIWFGIATAHDFESHDDITEERLYQNIFASHFGQLAIIFLWTSGNLFHVAWQGNFESWVQDPLHVRPIAHAIWDPHFGQPAVEAFTRGGALGPVNIAYSGVYQWWYTIGLRTNEDLYTGALFLLFLSAISLIAGWLHLQPKWKPSVSWFKNAESRLNHHLSGLFGVSSLAWTGHLVHVAIPGSRGEYVRWNNFLDVLPYPQGLGPLFTGQWNLYAQNPDSSSHLFGTSQGAGTAILTLLGGFHPQTQSLWLTDIAHHHLAIAFIFLVAGHMYRTNFGIGHSMKDLLEAHTPPGGRLGRGHKGLYDTINNSIHFQLGLALASLGVITSLVAQHMYSLPAYAFIAQDFTTQAALYTHHQYIAGFIMTGAFAHGAIFFIRDYNPEQNEDNVLARMLDHKEAIKSHLSWVSLFLGFHTLGLYVHNDVMLAFGTPEKQILIEPIFAQWIQSAHGKTSYGFDVLLSSTSGPAFNAGRSIWLPGWLNAVNENSNSLFLTIGPGDFLVHHAIALGLHTTTLILVKGALDARGSKLMPDKKDFGYSFPCDGPGRGGTCDISAWDAFYLAVFWMLNTIGWVTFYWHWKHITLWQGNVSQFNESSTYLMGWLRDYLWLNSSQLINGYNPFGTNSLSVWAWMFLFGHLVWATGFMFLISWRGYWQELIETLAWAHERTPLANLIRWRDKPVALSIVQARLVGLAHFSVGYIFTYAAFLIASTSGKFG.

The next 8 membrane-spanning stretches (helical) occupy residues 46–69 (IFASHFGQLAIIFLWTSGNLFHVA), 135–158 (LYTGALFLLFLSAISLIAGWLHLQ), 175–199 (LNHHLSGLFGVSSLAWTGHLVHVAI), 273–291 (IAHHHLAIAFIFLVAGHMY), 330–353 (IHFQLGLALASLGVITSLVAQHMY), 369–395 (AALYTHHQYIAGFIMTGAFAHGAIFFI), 417–439 (AIKSHLSWVSLFLGFHTLGLYVH), and 517–535 (FLVHHAIALGLHTTTLILV). [4Fe-4S] cluster is bound by residues Cys559 and Cys568. A run of 2 helical transmembrane segments spans residues 575–596 (AFYLAVFWMLNTIGWVTFYWHW) and 643–665 (LSVWAWMFLFGHLVWATGFMFLI). His654, Met662, and Tyr670 together coordinate chlorophyll a. Phylloquinone is bound at residue Trp671. The chain crosses the membrane as a helical span at residues 707–727 (LVGLAHFSVGYIFTYAAFLIA).

Belongs to the PsaA/PsaB family. The PsaA/B heterodimer binds the P700 chlorophyll special pair and subsequent electron acceptors. PSI consists of a core antenna complex that captures photons, and an electron transfer chain that converts photonic excitation into a charge separation. The eukaryotic PSI reaction center is composed of at least 11 subunits. P700 is a chlorophyll a/chlorophyll a' dimer, A0 is one or more chlorophyll a, A1 is one or both phylloquinones and FX is a shared 4Fe-4S iron-sulfur center. serves as cofactor.

It is found in the plastid. The protein resides in the chloroplast thylakoid membrane. It carries out the reaction reduced [plastocyanin] + hnu + oxidized [2Fe-2S]-[ferredoxin] = oxidized [plastocyanin] + reduced [2Fe-2S]-[ferredoxin]. Functionally, psaA and PsaB bind P700, the primary electron donor of photosystem I (PSI), as well as the electron acceptors A0, A1 and FX. PSI is a plastocyanin-ferredoxin oxidoreductase, converting photonic excitation into a charge separation, which transfers an electron from the donor P700 chlorophyll pair to the spectroscopically characterized acceptors A0, A1, FX, FA and FB in turn. Oxidized P700 is reduced on the lumenal side of the thylakoid membrane by plastocyanin. This chain is Photosystem I P700 chlorophyll a apoprotein A2, found in Liriodendron tulipifera (Tuliptree).